The following is a 327-amino-acid chain: ATP-dependent 6-phosphofructokinase (327 aa).

ATP contacts are provided by residues G12, 73–74, and 103–106; these read RL and GDGS. D104 provides a ligand contact to Mg(2+). Position 126–128 (126–128) interacts with substrate; it reads TID. D128 (proton acceptor) is an active-site residue. R155 is a binding site for ADP. Substrate-binding positions include R163 and 170–172; that span reads MGH. ADP-binding positions include 186-188 and 214-216; these read GAD and KRS. Residues E223, R245, and 251 to 254 contribute to the substrate site; that span reads HTQR.

The protein belongs to the phosphofructokinase type A (PFKA) family. ATP-dependent PFK group I subfamily. Prokaryotic clade 'B1' sub-subfamily. Homotetramer. Mg(2+) serves as cofactor.

The protein localises to the cytoplasm. It carries out the reaction beta-D-fructose 6-phosphate + ATP = beta-D-fructose 1,6-bisphosphate + ADP + H(+). Its pathway is carbohydrate degradation; glycolysis; D-glyceraldehyde 3-phosphate and glycerone phosphate from D-glucose: step 3/4. With respect to regulation, allosterically activated by ADP and other diphosphonucleosides, and allosterically inhibited by phosphoenolpyruvate. Catalyzes the phosphorylation of D-fructose 6-phosphate to fructose 1,6-bisphosphate by ATP, the first committing step of glycolysis. The chain is ATP-dependent 6-phosphofructokinase from Spiroplasma citri.